A 196-amino-acid chain; its full sequence is Small ribosomal subunit protein uS4c (196 aa).

Residues 15-36 (LGTLPGLTSKRPRSGSDLKNPL) form a disordered region. Positions 89–150 (MRLDNILFRL…KQRSKALIQN (62 aa)) constitute an S4 RNA-binding domain.

The protein belongs to the universal ribosomal protein uS4 family. As to quaternary structure, part of the 30S ribosomal subunit. Contacts protein S5. The interaction surface between S4 and S5 is involved in control of translational fidelity.

The protein resides in the plastid. It is found in the chloroplast. Functionally, one of the primary rRNA binding proteins, it binds directly to 16S rRNA where it nucleates assembly of the body of the 30S subunit. Its function is as follows. With S5 and S12 plays an important role in translational accuracy. The sequence is that of Small ribosomal subunit protein uS4c (rps4) from Yucca filamentosa (Bear-grass).